The following is a 634-amino-acid chain: MEPSPLSPSGAALPLPLSLAPPPLPLPAAAVVHVSFPEVTSALLESLNQQRLQGQLCDVSIRVQGREFRAHRAVLAASSPYFHDQVLLKGMTSISLPSVMDPGAFETVLASAYTGRLSMAAADIVNFLTVGSVLQMWHIVDKCTELLREGRASATTTITTAAATSVTVPGAGVPSGSGGTVAPATMGSARSHASSRASENQSPSSSNYFSPRESTDFSSSSQEAFAASAVGSGERRGGGPVFPAPVVGSGGATSGKLLLEADELCDDGGDGRGAVVPGAGLRRPTYTPPSIMPQKHWVYVKRGGNCPAPTPLVPQDPDLEEEEEEEDLVLTCEDDEDEELGGSSRVPVGGGPEATLSISDVRTLSEPPDKGEEQVNFCESSNDFGPYEGGGPVAGLDDSGGPTPSSYAPSHPPRPLLPLDMQGNQILVFPSSSSSSSSQAPGQPPGNQAEHGAVTVGGTSVGSLGVPGSVGGVPGGTGSGDGNKIFLCHCGKAFSHKSMRDRHVNMHLNLRPFDCPVCNKKFKMKHHLTEHMKTHTGLKPYECGVCAKKFMWRDSFMRHRGHCERRHRLGGVGAVPGPGTPTGPSLPSKRESPGVGGGSGDEASAATPPSSRRVWSPPRVHKVEMGFGGGGGAN.

The 65-residue stretch at 57–121 folds into the BTB domain; it reads CDVSIRVQGR…AYTGRLSMAA (65 aa). Disordered regions lie at residues 167 to 247 and 308 to 461; these read TVPG…APVV and APTP…GTSV. Low complexity predominate over residues 180 to 198; sequence TVAPATMGSARSHASSRAS. A compositionally biased stretch (polar residues) spans 199 to 209; sequence ENQSPSSSNYF. Serine 202 carries the post-translational modification Phosphoserine. Residues 217-229 are compositionally biased toward low complexity; it reads FSSSSQEAFAASA. Residues 317–340 are compositionally biased toward acidic residues; the sequence is PDLEEEEEEEDLVLTCEDDEDEEL. Positions 452 to 461 are enriched in low complexity; it reads GAVTVGGTSV. A C2H2-type 1; atypical zinc finger spans residues 486-507; that stretch reads FLCHCGKAFSHKSMRDRHVNMH. 2 consecutive C2H2-type zinc fingers follow at residues 513-535 and 541-562; these read FDCP…MKTH and YECG…HRGH. Residues 568–634 are disordered; the sequence is RLGGVGAVPG…MGFGGGGGAN (67 aa). Residues 608 to 618 are compositionally biased toward low complexity; sequence PPSSRRVWSPP.

Belongs to the krueppel C2H2-type zinc-finger protein family.

Its subcellular location is the nucleus. Functionally, may be involved in transcriptional regulation. This is Zinc finger and BTB domain-containing protein 22 (ZBTB22) from Homo sapiens (Human).